We begin with the raw amino-acid sequence, 477 residues long: Glutamate--tRNA ligase (477 aa).

A 'HIGH' region motif is present at residues 8–18 (PSPTGTLHIGT). The short motif at 247-251 (KLSKR) is the 'KMSKS' region element. Residue K250 participates in ATP binding.

The protein belongs to the class-I aminoacyl-tRNA synthetase family. Glutamate--tRNA ligase type 1 subfamily. As to quaternary structure, monomer.

The protein localises to the cytoplasm. The enzyme catalyses tRNA(Glu) + L-glutamate + ATP = L-glutamyl-tRNA(Glu) + AMP + diphosphate. Its function is as follows. Catalyzes the attachment of glutamate to tRNA(Glu) in a two-step reaction: glutamate is first activated by ATP to form Glu-AMP and then transferred to the acceptor end of tRNA(Glu). The sequence is that of Glutamate--tRNA ligase from Synechococcus sp. (strain CC9902).